Here is a 1264-residue protein sequence, read N- to C-terminus: BRCA2-interacting transcriptional repressor EMSY (1264 aa).

The segment at 1–442 (MPVVWPTLLD…LPKPVTATLP (442 aa)) is interaction with BRCA2. The region spanning 16 to 114 (CKRILRKLEL…EWSIEGRRLV (99 aa)) is the ENT domain. The tract at residues 118 to 122 (PRLVP) is interaction with ZMYND11. The interval 145–179 (PVPAETASKDGVSCSDEDEKPRKRRRTNSSSSSPV) is disordered. Residue Thr-171 is modified to Phosphothreonine. Residues Ser-173 and Ser-177 each carry the phosphoserine modification. 2 O-linked (GlcNAc) serine glycosylation sites follow: Ser-192 and Ser-200. Ser-202 is subject to Phosphoserine. The O-linked (GlcNAc) threonine glycan is linked to Thr-235. Positions 364–406 (FPKQHQQSPKQQLQQVQQQTQQPVAQPSSVSQQQQPQQSALPP) are enriched in low complexity. The tract at residues 364–407 (FPKQHQQSPKQQLQQVQQQTQQPVAQPSSVSQQQQPQQSALPPG) is disordered. 2 O-linked (GlcNAc) threonine glycosylation sites follow: Thr-465 and Thr-470. O-linked (GlcNAc) serine glycosylation is present at Ser-521. Over residues 660-671 (SRVADASNSSAQ) the composition is skewed to polar residues. The tract at residues 660–700 (SRVADASNSSAQEGKEEPQGYTDSSSSSTESSQSSQDSQPV) is disordered. Over residues 681–698 (TDSSSSSTESSQSSQDSQ) the composition is skewed to low complexity. A phosphoserine mark is found at Ser-782 and Ser-785. A glycan (O-linked (GlcNAc) threonine) is linked at Thr-1069. Position 1085 is a phosphoserine (Ser-1085). The interval 1232–1264 (QLDDDETAMEQDIDSSTEDGTEPSPSQSAVERS) is disordered. The span at 1233–1252 (LDDDETAMEQDIDSSTEDGT) shows a compositional bias: acidic residues. Polar residues predominate over residues 1254–1264 (PSPSQSAVERS).

Homodimer. Interacts with the transactivation domain of BRCA2. Interacts with CBX1 (via chromoshadow domain). Interacts with ZMYND11. Does not interact with CBX3 or CBX5. Component of a nuclear receptor-mediated transcription complex composed of at least ZNF335, CCAR2 and EMSY; the complex stimulates the transcription of nuclear receptor target genes such as SOX9 and HOXA1. Within the complex interacts with CCAR2 and ZNF335. Components of this complex may associate with components of a histone methylation complex to form a complex at least composed of ZNF335, HCFC1, CCAR2, EMSY, MKI67, RBBP5, ASH2L and WDR5. Within this complex, interacts with ASH2L and RBBP5.

The protein localises to the nucleus. Its function is as follows. Regulator which is able to repress transcription, possibly via its interaction with a multiprotein chromatin remodeling complex that modifies the chromatin. Its interaction with BRCA2 suggests that it may play a central role in the DNA repair function of BRCA2. Mediates ligand-dependent transcriptional activation by nuclear hormone receptors. This is BRCA2-interacting transcriptional repressor EMSY from Mus musculus (Mouse).